The following is a 258-amino-acid chain: uncharacterized protein (258 aa).

6 helical membrane passes run 24-44 (IPLFTVIVALLTIILGIVNIF), 70-90 (PLVHHGVISFILGLLGIFLLM), 100-120 (LCTIAMFFGFLEVIPAIAYLI), 130-150 (VYVGIGGWVYSLLAMYLLNLF), 157-177 (LLNLPQVVRMALALVAPVLGL), and 181-201 (FSITIVLHLTAVVISIIFSFA). His-188 is a catalytic residue.

This sequence belongs to the peptidase S54 family.

Its subcellular location is the golgi apparatus membrane. This is an uncharacterized protein from Schizosaccharomyces pombe (strain 972 / ATCC 24843) (Fission yeast).